Here is a 187-residue protein sequence, read N- to C-terminus: Protein GrpE (187 aa).

Residues Met-1 to Glu-23 are disordered. Positions Leu-7 to Glu-23 are enriched in low complexity.

It belongs to the GrpE family. In terms of assembly, homodimer.

Its subcellular location is the cytoplasm. Its function is as follows. Participates actively in the response to hyperosmotic and heat shock by preventing the aggregation of stress-denatured proteins, in association with DnaK and GrpE. It is the nucleotide exchange factor for DnaK and may function as a thermosensor. Unfolded proteins bind initially to DnaJ; upon interaction with the DnaJ-bound protein, DnaK hydrolyzes its bound ATP, resulting in the formation of a stable complex. GrpE releases ADP from DnaK; ATP binding to DnaK triggers the release of the substrate protein, thus completing the reaction cycle. Several rounds of ATP-dependent interactions between DnaJ, DnaK and GrpE are required for fully efficient folding. This is Protein GrpE from Pseudomonas savastanoi pv. phaseolicola (strain 1448A / Race 6) (Pseudomonas syringae pv. phaseolicola (strain 1448A / Race 6)).